Reading from the N-terminus, the 482-residue chain is Glutamate--tRNA ligase 2 (482 aa).

Residues 16–26 carry the 'HIGH' region motif; sequence PSPTGYLHLGN. Positions 113, 115, 140, and 142 each coordinate Zn(2+). Residues 257-261 carry the 'KMSKS' region motif; it reads PLSKR. Residue K260 coordinates ATP.

The protein belongs to the class-I aminoacyl-tRNA synthetase family. Glutamate--tRNA ligase type 1 subfamily. Monomer. Zn(2+) is required as a cofactor.

It localises to the cytoplasm. The catalysed reaction is tRNA(Glu) + L-glutamate + ATP = L-glutamyl-tRNA(Glu) + AMP + diphosphate. Its function is as follows. Catalyzes the attachment of glutamate to tRNA(Glu) in a two-step reaction: glutamate is first activated by ATP to form Glu-AMP and then transferred to the acceptor end of tRNA(Glu). This chain is Glutamate--tRNA ligase 2, found in Acidithiobacillus ferrooxidans (strain ATCC 53993 / BNL-5-31) (Leptospirillum ferrooxidans (ATCC 53993)).